The following is a 648-amino-acid chain: Transcriptional regulator ManR (648 aa).

PRD domains are found at residues 187 to 292 (KFLH…YPLQ) and 297 to 404 (LENA…MQGS). Phosphohistidine; by HPr occurs at positions 222, 281, 334, and 393. The PTS EIIB type-2 domain maps to 409 to 500 (KKAVIVCHMG…FIRQLGESHR (92 aa)). The residue at position 415 (C415) is a Phosphocysteine; by EIIA. A PTS EIIA type-2 domain is found at 510–648 (NNTTPFLVFL…VMTFLSHLDY (139 aa)). H570 is modified (phosphohistidine; by EIIB).

The protein belongs to the transcriptional antiterminator BglG family.

The catalysed reaction is D-mannose(out) + N(pros)-phospho-L-histidyl-[protein] = D-mannose 6-phosphate(in) + L-histidyl-[protein]. Its activity is regulated as follows. The regulatory activity of ManR is modulated by phosphorylation and dephosphorylation of the various ManR domains. It becomes activated via phosphoryl group transfer from PEP, EI and HPr on the two conserved histidine residues in the PRD 2 domain, whereas phosphorylation of the EIIA-like domain on His-570 by the PTS EIIB-Man domain of ManP inactivates ManR. Functionally, positively regulates the expression of the mannose operon that consists of three genes, manP, manA, and yjdF, which are responsible for the transport and utilization of mannose. Also activates its own expression. The polypeptide is Transcriptional regulator ManR (manR) (Bacillus subtilis (strain 168)).